A 462-amino-acid polypeptide reads, in one-letter code: MPSCTASTMPGMICKNPDLEFDSLQPCFYPDEDDFYFGGPDSTPPGEDIWKKFELLPTPPLSPSRAFPEHSPEPSNWATEMLLPEADLWGNPAEEDAFGLGGLGGLTPNPVILQDCMWSGFSAREKLERAVNEKLQHGHGPPGVSSACSAPGVGASSPGGRALGGSSSASHTGATLPTDLSHPAAECVDPAVVFPFPVNKRESASVPAAPTSAPATSAAVTSVSVPATAPVAAPARAGGRPASSGEAKALSTSGEDTLSDSDDEDDEEEDEEEEIDVVTVEKRRSSSNNKAVTTFTITVRPKTSALGLGRAQPGELILKRCVPIHQQHNYAAPSPYVESEDAPPQKKIKSEASPRPLKSVVPAKAKSLSPRNSDSEDSERRRNHNILERQRRNDLRSSFLTLRDHVPELVKNEKAAKVVILKKATEYVHALQANEHQLLLEKEKLQARQQQLLKKIEHARTC.

The segment at Leu-19–Glu-47 is interaction with AURKA. Residues Leu-61–Gly-90 form an interaction with AURKA and FBXW7 region. A 9aaTAD motif is present at residues Asn-76–Glu-85. Disordered stretches follow at residues Lys-134 to Pro-177, Ala-232 to Asn-289, and Ala-332 to Gln-390. Low complexity-rich tracts occupy residues Gly-143–Leu-176 and Ala-232–Ser-244. A compositionally biased stretch (acidic residues) spans Thr-257–Asp-276. A phosphoserine; by CK2 mark is found at Ser-259 and Ser-261. The 53-residue stretch at Glu-379–Leu-431 folds into the bHLH domain. The leucine-zipper stretch occupies residues Leu-431–Leu-452.

Efficient DNA binding requires dimerization with another bHLH protein. Binds DNA as a heterodimer with MAX. Interacts with KDM5A, KDM5B and HUWE1. Interacts with MYCNOS. Interacts with AURKA; interaction is phospho-independent and triggers AURKA activation; AURKA competes with FBXW7 for binding to unphosphorylated MYCN but not for binding to unphosphorylated MYCN. Interacts with FBXW7; FBXW7 competes with AURKA for binding to unphosphorylated MYCN but not for binding to phosphorylated MYCN. In terms of processing, phosphorylated by GSK3-beta which may promote its degradation. Phosphorylated by AURKA.

The protein resides in the nucleus. Its function is as follows. Positively regulates the transcription of MYCNOS in neuroblastoma cells. The polypeptide is N-myc proto-oncogene protein (Mycn) (Mus musculus (Mouse)).